The chain runs to 817 residues: Collagen-like protein 4 (817 aa).

3 consecutive Collagen-like domains span residues 83–142 (GDTG…KGQD), 145–264 (GSKG…KGDD), and 268–327 (GIQG…KGLK). 3 disordered regions span residues 87 to 107 (NKGE…GDNG), 120 to 458 (FNGS…DKGD), and 479 to 543 (IIGD…KGDI). N-linked (GlcNAc...) asparagine; by host glycans are attached at residues Asn-106 and Asn-121. Composition is skewed to basic and acidic residues over residues 126 to 141 (IKGD…DKGQ) and 149 to 161 (QKGE…DDGI). The N-linked (GlcNAc...) asparagine; by host glycan is linked to Asn-183. Composition is skewed to basic and acidic residues over residues 212-224 (IKGD…EDGI) and 233-245 (SKGE…DDGT). A compositionally biased stretch (low complexity) spans 246 to 260 (KGITGLKGTKGNSGS). The span at 294–341 (KGSDGDKGNKGLDGIKGDLGDDGIKGDKGIKGLKGDTGNSDKGDKGSK) shows a compositional bias: basic and acidic residues. Residues Asn-345 and Asn-360 are each glycosylated (N-linked (GlcNAc...) asparagine; by host). 2 consecutive Collagen-like domains span residues 352 to 411 (GDKG…KGLV) and 430 to 489 (GDKG…KGIK). 3 stretches are compositionally biased toward basic and acidic residues: residues 354–368 (KGSK…ESGD), 377–390 (SKGD…KGDL), and 428–458 (SKGD…DKGD). The span at 480 to 494 (IGDNGSKGIKGSSNN) shows a compositional bias: low complexity. N-linked (GlcNAc...) asparagine; by host glycosylation occurs at Asn-483. 3 stretches are compositionally biased toward basic and acidic residues: residues 495–504 (KGDKGDKGNT), 515–525 (IKGDKGIKGSK), and 533–543 (EKGEKGTKGDI). A Collagen-like 6 domain is found at 512–570 (TKGIKGDKGIKGSKGDLGSVGEKGEKGTKGDIGTKGETGLKGIIGDKGELGSKGIKGLS). Asn-709, Asn-712, and Asn-715 each carry an N-linked (GlcNAc...) asparagine; by host glycan. Residues 757–771 (GGGGASAFGNGGRGG) show a composition bias toward gly residues. The interval 757-804 (GGGGASAFGNGGRGGNTTQAATKGEYGSGGGGGSEFSPSGSTNGGDGG) is disordered. A glycan (N-linked (GlcNAc...) asparagine; by host) is linked at Asn-772.

In terms of processing, may be hydroxylated on lysine by the viral-encoded procollagen-lysine,2-oxoglutarate 5-dioxygenase.

It localises to the virion. In terms of biological role, may participate in the formation of a layer of cross-linked glycosylated fibrils at the viral surface thus giving it a hairy-like appearance. The polypeptide is Collagen-like protein 4 (Acanthamoeba polyphaga (Amoeba)).